Reading from the N-terminus, the 284-residue chain is Aspartate dehydrogenase domain-containing protein (284 aa).

The protein belongs to the L-aspartate dehydrogenase family.

The polypeptide is Aspartate dehydrogenase domain-containing protein (aspdh) (Xenopus tropicalis (Western clawed frog)).